Here is a 336-residue protein sequence, read N- to C-terminus: Ribosomal RNA small subunit methyltransferase C (336 aa).

The protein belongs to the methyltransferase superfamily. RsmC family. Monomer.

It localises to the cytoplasm. The catalysed reaction is guanosine(1207) in 16S rRNA + S-adenosyl-L-methionine = N(2)-methylguanosine(1207) in 16S rRNA + S-adenosyl-L-homocysteine + H(+). In terms of biological role, specifically methylates the guanine in position 1207 of 16S rRNA in the 30S particle. The polypeptide is Ribosomal RNA small subunit methyltransferase C (Hamiltonella defensa subsp. Acyrthosiphon pisum (strain 5AT)).